The chain runs to 374 residues: Dual-specificity RNA methyltransferase RlmN (374 aa).

Catalysis depends on Glu91, which acts as the Proton acceptor. In terms of domain architecture, Radical SAM core spans 97–340 (EDDRGTLCIS…TTVRKTRGDD (244 aa)). A disulfide bridge links Cys104 with Cys345. Residues Cys111, Cys115, and Cys118 each contribute to the [4Fe-4S] cluster site. S-adenosyl-L-methionine contacts are provided by residues 165–166 (GE), Ser197, 219–221 (SLH), and Asn302. The active-site S-methylcysteine intermediate is Cys345.

This sequence belongs to the radical SAM superfamily. RlmN family. Requires [4Fe-4S] cluster as cofactor.

Its subcellular location is the cytoplasm. The catalysed reaction is adenosine(2503) in 23S rRNA + 2 reduced [2Fe-2S]-[ferredoxin] + 2 S-adenosyl-L-methionine = 2-methyladenosine(2503) in 23S rRNA + 5'-deoxyadenosine + L-methionine + 2 oxidized [2Fe-2S]-[ferredoxin] + S-adenosyl-L-homocysteine. The enzyme catalyses adenosine(37) in tRNA + 2 reduced [2Fe-2S]-[ferredoxin] + 2 S-adenosyl-L-methionine = 2-methyladenosine(37) in tRNA + 5'-deoxyadenosine + L-methionine + 2 oxidized [2Fe-2S]-[ferredoxin] + S-adenosyl-L-homocysteine. Its function is as follows. Specifically methylates position 2 of adenine 2503 in 23S rRNA and position 2 of adenine 37 in tRNAs. m2A2503 modification seems to play a crucial role in the proofreading step occurring at the peptidyl transferase center and thus would serve to optimize ribosomal fidelity. This Acidovorax sp. (strain JS42) protein is Dual-specificity RNA methyltransferase RlmN.